Reading from the N-terminus, the 162-residue chain is Interleukin-15 (162 aa).

The N-terminal stretch at M1–A29 is a signal peptide. A propeptide spanning residues G30 to A48 is cleaved from the precursor. Cystine bridges form between C83/C133 and C90/C136. N113, N121, and N127 each carry an N-linked (GlcNAc...) asparagine glycan.

The protein belongs to the IL-15/IL-21 family.

It is found in the secreted. Functionally, cytokine that plays a major role in the development of inflammatory and protective immune responses to microbial invaders and parasites by modulating immune cells of both the innate and adaptive immune systems. Stimulates the proliferation of natural killer cells, T-cells and B-cells and promotes the secretion of several cytokines. In monocytes, induces the production of IL8 and monocyte chemotactic protein 1/CCL2, two chemokines that attract neutrophils and monocytes respectively to sites of infection. Unlike most cytokines, which are secreted in soluble form, IL15 is expressed in association with its high affinity IL15RA on the surface of IL15-producing cells and delivers signals to target cells that express IL2RB and IL2RG receptor subunits. Binding to its receptor triggers the phosphorylation of JAK1 and JAK3 and the recruitment and subsequent phosphorylation of signal transducer and activator of transcription-3/STAT3 and STAT5. In mast cells, induces the rapid tyrosine phosphorylation of STAT6 and thereby controls mast cell survival and release of cytokines such as IL4. This chain is Interleukin-15 (IL15), found in Bubalus bubalis (Domestic water buffalo).